Here is a 1520-residue protein sequence, read N- to C-terminus: Glutamate synthase [NADPH] large chain (1520 aa).

The For GATase activity role is filled by C22. One can recognise a Glutamine amidotransferase type-2 domain in the interval 22–415 (CGIGLYAHLK…PGKMLLIDLE (394 aa)). A disordered region spans residues 890–913 (GGKSNSGEGGEDPKRFVPDENGDD). Positions 900 to 913 (EDPKRFVPDENGDD) are enriched in basic and acidic residues. 1060-1112 (LAEAHQTLMLNGLRDRVVLETDGKLMTGRDVVMAALLGAEEFGFATAPLVVLG) is an FMN binding site. 3 residues coordinate [3Fe-4S] cluster: C1113, C1119, and C1124.

The protein belongs to the glutamate synthase family. As to quaternary structure, aggregate of 4 catalytic active heterodimers, consisting of a large and a small subunit. Requires [3Fe-4S] cluster as cofactor. It depends on FAD as a cofactor. The cofactor is FMN.

It carries out the reaction 2 L-glutamate + NADP(+) = L-glutamine + 2-oxoglutarate + NADPH + H(+). Its pathway is amino-acid biosynthesis; L-glutamate biosynthesis via GLT pathway; L-glutamate from 2-oxoglutarate and L-glutamine (NADP(+) route): step 1/1. It participates in energy metabolism; nitrogen metabolism. This Bacillus subtilis (strain 168) protein is Glutamate synthase [NADPH] large chain (gltA).